Here is a 134-residue protein sequence, read N- to C-terminus: D-ribose pyranase (134 aa).

Catalysis depends on His20, which acts as the Proton donor. Residues Asp28, His99, and 123 to 125 contribute to the substrate site; that span reads YSN.

This sequence belongs to the RbsD / FucU family. RbsD subfamily. In terms of assembly, homodecamer.

The protein localises to the cytoplasm. It carries out the reaction beta-D-ribopyranose = beta-D-ribofuranose. It functions in the pathway carbohydrate metabolism; D-ribose degradation; D-ribose 5-phosphate from beta-D-ribopyranose: step 1/2. Functionally, catalyzes the interconversion of beta-pyran and beta-furan forms of D-ribose. The protein is D-ribose pyranase of Staphylococcus aureus (strain Mu3 / ATCC 700698).